A 131-amino-acid chain; its full sequence is Methylglyoxal synthase (131 aa).

An MGS-like domain is found at 1–131 (MKIALIAHDK…GDLDYRKLRK (131 aa)). Residues His8, Lys12, 34-37 (TGTT), and 54-55 (SG) each bind substrate. Asp60 acts as the Proton donor/acceptor in catalysis. Residue His87 participates in substrate binding.

It belongs to the methylglyoxal synthase family.

It carries out the reaction dihydroxyacetone phosphate = methylglyoxal + phosphate. Catalyzes the formation of methylglyoxal from dihydroxyacetone phosphate. This chain is Methylglyoxal synthase, found in Bacillus cereus (strain ATCC 14579 / DSM 31 / CCUG 7414 / JCM 2152 / NBRC 15305 / NCIMB 9373 / NCTC 2599 / NRRL B-3711).